Consider the following 174-residue polypeptide: Ribulose bisphosphate carboxylase small subunit, chloroplastic 1 (174 aa).

The N-terminal 45 residues, 1–45 (MAPAVMASSATTVAPFQGLKSTAGLPVSRRSRGSLGSVSNGGRIR), are a transit peptide targeting the chloroplast.

It belongs to the RuBisCO small chain family. As to quaternary structure, heterohexadecamer of 8 large and 8 small subunits.

It localises to the plastid. The protein resides in the chloroplast. Its function is as follows. RuBisCO catalyzes two reactions: the carboxylation of D-ribulose 1,5-bisphosphate, the primary event in carbon dioxide fixation, as well as the oxidative fragmentation of the pentose substrate. Both reactions occur simultaneously and in competition at the same active site. Although the small subunit is not catalytic it is essential for maximal activity. This chain is Ribulose bisphosphate carboxylase small subunit, chloroplastic 1, found in Triticum aestivum (Wheat).